The chain runs to 267 residues: Cell cycle checkpoint protein RAD1 homolog mrt-2 (267 aa).

Belongs to the Rad1 family. In terms of assembly, probable component of the toroidal 9-1-1 (RAD9-RAD1-HUS1) complex, composed of hpr-9, mrt-2 and hus-1. Interacts with hus-1. Might associate with hpr-9.

It is found in the nucleus. The enzyme catalyses Exonucleolytic cleavage in the 3'- to 5'-direction to yield nucleoside 5'-phosphates.. In terms of biological role, may be a component of the 9-1-1 cell-cycle checkpoint response complex that plays a major role in DNA repair. Promotes DNA double strand break-induced cell cycle arrest and apoptosis, thereby playing a role in genome stability. Also required for telomere length maintenance and germline immortality. May possess 3'-&gt;5' double stranded DNA exonuclease activity. The chain is Cell cycle checkpoint protein RAD1 homolog mrt-2 from Caenorhabditis elegans.